Here is an 860-residue protein sequence, read N- to C-terminus: Leucine--tRNA ligase (860 aa).

The 'HIGH' region signature appears at 42-52; sequence PYPSGRLHMGH. The 'KMSKS' region signature appears at 619–623; that stretch reads KMSKS. Lys622 is a binding site for ATP.

The protein belongs to the class-I aminoacyl-tRNA synthetase family.

Its subcellular location is the cytoplasm. The catalysed reaction is tRNA(Leu) + L-leucine + ATP = L-leucyl-tRNA(Leu) + AMP + diphosphate. In Actinobacillus succinogenes (strain ATCC 55618 / DSM 22257 / CCUG 43843 / 130Z), this protein is Leucine--tRNA ligase.